Reading from the N-terminus, the 166-residue chain is Phosphopantetheine adenylyltransferase (166 aa).

Ser-10 contributes to the substrate binding site. Residues Ser-10–Phe-11 and His-18 each bind ATP. 3 residues coordinate substrate: Lys-42, Ala-79, and Arg-93. Residues Gly-94–Arg-96, Glu-104, and Val-129–Thr-135 contribute to the ATP site.

The protein belongs to the bacterial CoaD family. In terms of assembly, homohexamer. Requires Mg(2+) as cofactor.

The protein resides in the cytoplasm. It catalyses the reaction (R)-4'-phosphopantetheine + ATP + H(+) = 3'-dephospho-CoA + diphosphate. The protein operates within cofactor biosynthesis; coenzyme A biosynthesis; CoA from (R)-pantothenate: step 4/5. In terms of biological role, reversibly transfers an adenylyl group from ATP to 4'-phosphopantetheine, yielding dephospho-CoA (dPCoA) and pyrophosphate. This is Phosphopantetheine adenylyltransferase from Methylobacterium sp. (strain 4-46).